Reading from the N-terminus, the 535-residue chain is Proto-oncogene tyrosine-protein kinase Src (535 aa).

The disordered stretch occupies residues 1–56; it reads MGSNKSKPKDASQRRRSLEPSENVHGAGGAFPASQTPSKPASADGHRGPSAAFVPP. Gly2 carries N-myristoyl glycine lipidation. Over residues 7–19 the composition is skewed to basic and acidic residues; sequence KPKDASQRRRSLE. Residues Ser17, Ser21, and Ser74 each carry the phosphoserine modification. The region spanning 83–144 is the SH3 domain; the sequence is GGVTTFVALY…PSNYVAPSDS (62 aa). The region spanning 150–247 is the SH2 domain; the sequence is WYFGKITRRE…GLCHRLTTVC (98 aa). The residue at position 186 (Tyr186) is a Phosphotyrosine. A Protein kinase domain is found at 269-522; sequence LRLEVKLGQG…YLQAFLEDYF (254 aa). ATP contacts are provided by residues 275–283 and Lys297; that span reads LGQGCFGEV. Catalysis depends on Asp388, which acts as the Proton acceptor. The residue at position 418 (Tyr418) is a Phosphotyrosine; by autocatalysis. The residue at position 418 (Tyr418) is a Phosphotyrosine; by FAK2. Tyr529 carries the post-translational modification Phosphotyrosine; by CSK.

The protein belongs to the protein kinase superfamily. Tyr protein kinase family. SRC subfamily. As to quaternary structure, part of a complex comprised of PTPRA, BCAR1, BCAR3 (via SH2 domain) and SRC; the formation of the complex is dependent on integrin mediated-tyrosine phosphorylation of PTPRA. Interacts with CDCP1, TGFB1I1 and TOM1L2. Interacts with DDEF1/ASAP1 via its SH3 domain. Interacts with CCPG1. Interacts with the cytoplasmic domain of MUC1, phosphorylates it and increases binding of MUC1 with beta-catenin. Interacts with RALGPS1 via its SH3 domain. Interacts with CAV2 (tyrosine phosphorylated form). Interacts (via the SH3 domain and the protein kinase domain) with ARRB1; the interaction is independent of the phosphorylation state of SRC C-terminus. Interacts with FCAMR and PXN. Interacts with ARRB2. Interacts with ARRB1. Interacts with SRCIN1. Interacts with NDFIP2 and more weakly with NDFIP1. Interacts with PIK3CA and/or PIK3C2B, PTK2/FAK1, ESR1 (dimethylated on arginine) and FAK. Interacts (via SH2 and SH3 domain) with TNK2. Interacts (via protein kinase domain) with the tyrosine phosphorylated form of RUNX3 (via runt domain). Interacts with TRAF3 (via RING-type zinc finger domain). Interacts with RIGI, MAVS and TBK1. Interacts (via SH2 domain) with RACK1; the interaction is enhanced by tyrosine phosphorylation of RACK1 and inhibits SRC activity. Interacts (via SH2 domain) with the 'Tyr-402' phosphorylated form of PTK2B/PYK2. Interacts (via SH2 domain) with FLT3 (tyrosine phosphorylated). Identified in a complex containing FGFR4, NCAM1, CDH2, PLCG1, FRS2, SRC, SHC1, GAP43 and CTTN. Interacts with EPHB1; activates the MAPK/ERK cascade to regulate cell migration. Interacts with ERBB2 and STAT1. Interacts with PDGFRA (tyrosine phosphorylated). Interacts with CSF1R. Interacts (via SH2 domain) with the 'Tyr-9' phosphorylated form of PDPK1. Interacts with DDR2. Interacts with AMOTL2; this interaction regulates the translocation of phosphorylated SRC to peripheral cell-matrix adhesion sites. Interacts with DDR1 and DAB2. Interacts with TRAP1. Interacts with CBLC; the interaction is enhanced when SRC is phosphorylated at 'Tyr-424'. Interacts with ARHGEF5. Interacts (via cytoplasmic domain) with CEACAM1 (via SH2 domain); this interaction is regulated by trans-homophilic cell adhesion. Interacts with MPP2. Interacts with PRR7. Interacts (via kinase domain and to a lesser extent the SH2 domain) directly with PDLIM4; this interaction results in PTPN13-mediated dephosphorylation of this protein leading to its inactivation. Interacts with P85 (PIK3R1 or PIK3R2). Interacts with HNRNPA2B1. Interacts with IL6ST/gp130. Interacts (via SH3 domain) with PELP1 in the presence of 17-beta-estradiol. Interacts with AMBRA1. Myristoylated at Gly-2, and this is essential for targeting to membranes. Post-translationally, dephosphorylated at Tyr-529 by PTPRJ. Phosphorylated on Tyr-529 by c-Src kinase (CSK). The phosphorylated form is termed pp60c-src. Dephosphorylated by PTPRJ at Tyr-418. Normally maintained in an inactive conformation with the SH2 domain engaged with Tyr-529, the SH3 domain engaged with the SH2-kinase linker, and Tyr-418 dephosphorylated. Dephosphorylation of Tyr-529 as a result of protein tyrosine phosphatase (PTP) action disrupts the intramolecular interaction between the SH2 domain and Tyr-529, Tyr-418 can then become autophosphorylated, resulting in SRC activation. Phosphorylation of Tyr-529 by CSK allows this interaction to reform, resulting in SRC inactivation. CDK5-mediated phosphorylation at Ser-74 targets SRC to ubiquitin-dependent degradation and thus leads to cytoskeletal reorganization. Phosphorylated by PTK2/FAK1; this enhances kinase activity. Phosphorylated by PTK2B/PYK2; this enhances kinase activity. Upon activation of IL6ST by IL6, Tyr-418 is phosphorylated and Tyr-529 dephosphorylated. In terms of processing, displays reduced levels of autophosphorylation at Tyr-418 compared to isoform 2. Displays enhanced levels of autophosphorylation at Tyr-418 compared to isoform 1. Post-translationally, S-nitrosylation is important for activation of its kinase activity. In terms of processing, ubiquitinated in response to CDK5-mediated phosphorylation. Ubiquitination mediated by CBLC requires SRC autophosphorylation at Tyr-418 and may lead to lysosomal degradation.

It is found in the cell membrane. The protein localises to the mitochondrion inner membrane. The protein resides in the nucleus. It localises to the cytoplasm. Its subcellular location is the cytoskeleton. It is found in the perinuclear region. The protein localises to the cell junction. The protein resides in the focal adhesion. It catalyses the reaction L-tyrosyl-[protein] + ATP = O-phospho-L-tyrosyl-[protein] + ADP + H(+). Its activity is regulated as follows. Phosphorylation by CSK at Tyr-529 inhibits kinase activity. Inhibitory phosphorylation at Tyr-529 is enhanced by heme. Further phosphorylation by CDK1 partially reactivates CSK-inactivated SRC and facilitates complete reactivation by protein tyrosine phosphatase PTPRC. Integrin engagement stimulates kinase activity. Phosphorylation by PTK2/FAK1 enhances kinase activity. Butein and pseudosubstrate-based peptide inhibitors like CIYKYYF act as inhibitors. Phosphorylation at Tyr-418 increases kinase activity. Non-receptor protein tyrosine kinase which is activated following engagement of many different classes of cellular receptors including immune response receptors, integrins and other adhesion receptors, receptor protein tyrosine kinases, G protein-coupled receptors as well as cytokine receptors. Participates in signaling pathways that control a diverse spectrum of biological activities including gene transcription, immune response, cell adhesion, cell cycle progression, apoptosis, migration, and transformation. Due to functional redundancy between members of the SRC kinase family, identification of the specific role of each SRC kinase is very difficult. SRC appears to be one of the primary kinases activated following engagement of receptors and plays a role in the activation of other protein tyrosine kinase (PTK) families. Receptor clustering or dimerization leads to recruitment of SRC to the receptor complexes where it phosphorylates the tyrosine residues within the receptor cytoplasmic domains. Plays an important role in the regulation of cytoskeletal organization through phosphorylation of specific substrates such as AFAP1. Phosphorylation of AFAP1 allows the SRC SH2 domain to bind AFAP1 and to localize to actin filaments. Cytoskeletal reorganization is also controlled through the phosphorylation of cortactin (CTTN). When cells adhere via focal adhesions to the extracellular matrix, signals are transmitted by integrins into the cell resulting in tyrosine phosphorylation of a number of focal adhesion proteins, including PTK2/FAK1 and paxillin (PXN). In addition to phosphorylating focal adhesion proteins, SRC is also active at the sites of cell-cell contact adherens junctions and phosphorylates substrates such as beta-catenin (CTNNB1), delta-catenin (CTNND1), and plakoglobin (JUP). Another type of cell-cell junction, the gap junction, is also a target for SRC, which phosphorylates connexin-43 (GJA1). SRC is implicated in regulation of pre-mRNA-processing and phosphorylates RNA-binding proteins such as KHDRBS1. Phosphorylates PKP3 at 'Tyr-195' in response to reactive oxygen species, which may cause the release of PKP3 from desmosome cell junctions into the cytoplasm. Also plays a role in PDGF-mediated tyrosine phosphorylation of both STAT1 and STAT3, leading to increased DNA binding activity of these transcription factors. Involved in the RAS pathway through phosphorylation of RASA1 and RASGRF1. Plays a role in EGF-mediated calcium-activated chloride channel activation. Required for epidermal growth factor receptor (EGFR) internalization through phosphorylation of clathrin heavy chain (CLTC and CLTCL1) at 'Tyr-1477'. Involved in beta-arrestin (ARRB1 and ARRB2) desensitization through phosphorylation and activation of GRK2, leading to beta-arrestin phosphorylation and internalization. Has a critical role in the stimulation of the CDK20/MAPK3 mitogen-activated protein kinase cascade by epidermal growth factor. Might be involved not only in mediating the transduction of mitogenic signals at the level of the plasma membrane but also in controlling progression through the cell cycle via interaction with regulatory proteins in the nucleus. Plays an important role in osteoclastic bone resorption in conjunction with PTK2B/PYK2. Both the formation of a SRC-PTK2B/PYK2 complex and SRC kinase activity are necessary for this function. Recruited to activated integrins by PTK2B/PYK2, thereby phosphorylating CBL, which in turn induces the activation and recruitment of phosphatidylinositol 3-kinase to the cell membrane in a signaling pathway that is critical for osteoclast function. Promotes energy production in osteoclasts by activating mitochondrial cytochrome C oxidase. Phosphorylates DDR2 on tyrosine residues, thereby promoting its subsequent autophosphorylation. Phosphorylates RUNX3 and COX2 on tyrosine residues, TNK2 on 'Tyr-284' and CBL on 'Tyr-738'. Enhances RIGI-elicited antiviral signaling. Phosphorylates PDPK1 at 'Tyr-9', 'Tyr-373' and 'Tyr-376'. Phosphorylates BCAR1 at 'Tyr-226'. Phosphorylates CBLC at multiple tyrosine residues, phosphorylation at 'Tyr-341' activates CBLC E3 activity. Phosphorylates synaptic vesicle protein synaptophysin (SYP). Involved in anchorage-independent cell growth. Required for podosome formation. Mediates IL6 signaling by activating YAP1-NOTCH pathway to induce inflammation-induced epithelial regeneration. Phosphorylates OTUB1, promoting deubiquitination of RPTOR. In terms of biological role, non-receptor protein tyrosine kinase which phosphorylates synaptophysin with high affinity. Its function is as follows. Non-receptor protein tyrosine kinase which shows higher basal kinase activity than isoform 1, possibly due to weakened intramolecular interactions which enhance autophosphorylation of Tyr-418 and subsequent activation. The SH3 domain shows reduced affinity with the linker sequence between the SH2 and kinase domains which may account for the increased basal activity. Displays altered substrate specificity compared to isoform 1, showing weak affinity for synaptophysin and for peptide substrates containing class I or class II SH3 domain-binding motifs. Plays a role in L1CAM-mediated neurite elongation, possibly by acting downstream of L1CAM to drive cytoskeletal rearrangements involved in neurite outgrowth. The polypeptide is Proto-oncogene tyrosine-protein kinase Src (Mus musculus (Mouse)).